Here is a 382-residue protein sequence, read N- to C-terminus: tRNA (guanine(26)-N(2))-dimethyltransferase (382 aa).

In terms of domain architecture, Trm1 methyltransferase spans 4–370 (TEVIEGKARL…REFSEILECV (367 aa)). S-adenosyl-L-methionine contacts are provided by arginine 44, arginine 69, aspartate 87, aspartate 113, and alanine 114. Zn(2+) is bound by residues cysteine 244, cysteine 247, cysteine 261, and cysteine 264.

This sequence belongs to the class I-like SAM-binding methyltransferase superfamily. Trm1 family.

It carries out the reaction guanosine(26) in tRNA + 2 S-adenosyl-L-methionine = N(2)-dimethylguanosine(26) in tRNA + 2 S-adenosyl-L-homocysteine + 2 H(+). Its function is as follows. Dimethylates a single guanine residue at position 26 of a number of tRNAs using S-adenosyl-L-methionine as donor of the methyl groups. The chain is tRNA (guanine(26)-N(2))-dimethyltransferase from Metallosphaera sedula (strain ATCC 51363 / DSM 5348 / JCM 9185 / NBRC 15509 / TH2).